Reading from the N-terminus, the 1880-residue chain is Nonribosomal peptide synthetase otaB (1880 aa).

The tract at residues 205–594 (AQAVERGNSI…SVSFVGRRQA (390 aa)) is adenylation 1. Residues 728–804 (LPLSPLERQI…ELGAHLEQEA (77 aa)) form the Carrier domain. At Ser765 the chain carries O-(pantetheine 4'-phosphoryl)serine. The tract at residues 840–1250 (EDVYPCTALQ…LLSPQDQQQL (411 aa)) is condensation. The segment at 1269–1665 (QRQCLAHPQK…GRKDRQVKLR (397 aa)) is adenylation 2.

The protein belongs to the NRP synthetase family.

The enzyme catalyses 7-carboxymellein + L-phenylalanine + ATP = ochratoxin B + ADP + phosphate + H(+). It participates in mycotoxin biosynthesis. In terms of biological role, nonribosomal peptide synthetase; part of the gene cluster that mediates the biosynthesis of ochratoxin A (OTA), a mycotoxin composed of a chlorinated type I polyketide dihydroisocoumarin moiety linked to L-phenylalanine, and demonstrated to have nephrotoxic, immunotoxic, genotoxic, neurotoxic, and teratogenic properties. OtaB is responsible for the linking of phenylalanine to the dihydroisocoumarin ring. The pathway begins with the highly reducing polyketide synthase otaA that catalyzes the formation of the isocoumarin group during the initial stages of biosynthesis, starting from one acetate and 4 malonate units, to originate the characteristic pentaketide skeleton 7-methylmellein (7-MM) of the OTA molecule. The newly identified cyclase otaY might be involved in the polyketide cyclization reaction during the initial steps of the OTA biosynthesis. 7-MM is then oxidized into 7-carboxymellein (also called ochratoxin beta) by the cytochrome P450 monooxygenase otaC. The NRPS encoded by the otaB gene is involved in the linking of phenylalanine to the dihydroisocoumarin ring. The reaction catalyzed by NRPS results in the production of ochratoxin B (OTB), which is the non-chlorinated analog of OTA and which subsequently serves as the substrate of the halogenase otaD for chlorination activity to form the final molecular structure of OTA, containing a chlorine atom in the C-5 position of the molecule. In Aspergillus niger (strain ATCC MYA-4892 / CBS 513.88 / FGSC A1513), this protein is Nonribosomal peptide synthetase otaB.